Reading from the N-terminus, the 365-residue chain is Flagellar P-ring protein (365 aa).

An N-terminal signal peptide occupies residues 1–22 (MSVRRFLVWILALTVGAAPVMA).

This sequence belongs to the FlgI family. As to quaternary structure, the basal body constitutes a major portion of the flagellar organelle and consists of four rings (L,P,S, and M) mounted on a central rod.

It is found in the periplasm. Its subcellular location is the bacterial flagellum basal body. In terms of biological role, assembles around the rod to form the L-ring and probably protects the motor/basal body from shearing forces during rotation. The protein is Flagellar P-ring protein of Marinobacter nauticus (strain ATCC 700491 / DSM 11845 / VT8) (Marinobacter aquaeolei).